A 611-amino-acid chain; its full sequence is Leukotriene A-4 hydrolase (611 aa).

Lys-73 is subject to N6-acetyllysine. A peptide contacts are provided by residues Gln-135–Gln-137 and Ser-267–Glu-272. His-296 contributes to the Zn(2+) binding site. The active-site Proton acceptor is the Glu-297. The Zn(2+) site is built by His-300 and Glu-319. Residue Lys-337 is modified to N6-acetyllysine. Tyr-384 functions as the Proton donor in the catalytic mechanism. Lys-414 is subject to N6-acetyllysine. Ser-416 carries the phosphoserine modification. Arg-564–Lys-566 is an a peptide binding site. Lys-573 carries the post-translational modification N6-acetyllysine.

Belongs to the peptidase M1 family. As to quaternary structure, monomer. Zn(2+) is required as a cofactor. In terms of processing, phosphorylation at Ser-416 inhibits leukotriene-A4 hydrolase activity. activity.

The protein localises to the cytoplasm. The catalysed reaction is leukotriene A4 + H2O = leukotriene B4. It catalyses the reaction (5S,6S)-epoxy-(18R)-hydroxy-(7E,9E,11Z,14Z,16E)-eicosapentaenoate + H2O = resolvin E1. It carries out the reaction (5S,6S)-epoxy-(18S)-hydroxy-(7E,9E,11Z,14Z,16E)-eicosapentaenoate + H2O = 18S-resolvin E1. The enzyme catalyses Release of the N-terminal residue from a tripeptide.. It functions in the pathway lipid metabolism; leukotriene B4 biosynthesis. Inhibited by bestatin. The epoxide hydrolase activity is restrained by suicide inactivation that involves binding of LTA4 to Tyr-379. 4-(4-benzylphenyl)thiazol-2-amine (ARM1) selectively inhibits the epoxide hydrolase activity. Its function is as follows. Bifunctional zinc metalloenzyme that comprises both epoxide hydrolase (EH) and aminopeptidase activities. Acts as an epoxide hydrolase to catalyze the conversion of LTA4 to the pro-inflammatory mediator leukotriene B4 (LTB4). Also has aminopeptidase activity, with high affinity for N-terminal arginines of various synthetic tripeptides. In addition to its pro-inflammatory EH activity, may also counteract inflammation by its aminopeptidase activity, which inactivates by cleavage another neutrophil attractant, the tripeptide Pro-Gly-Pro (PGP), a bioactive fragment of collagen generated by the action of matrix metalloproteinase-9 (MMP9) and prolylendopeptidase (PREPL). Involved also in the biosynthesis of resolvin E1 and 18S-resolvin E1 from eicosapentaenoic acid, two lipid mediators that show potent anti-inflammatory and pro-resolving actions. The polypeptide is Leukotriene A-4 hydrolase (LTA4H) (Cavia porcellus (Guinea pig)).